Here is a 454-residue protein sequence, read N- to C-terminus: Chromosomal replication initiator protein DnaA (454 aa).

A domain I, interacts with DnaA modulators region spans residues 1-79 (MSLCLWKQCL…NSPFIKFKVY (79 aa)). The domain II stretch occupies residues 79–117 (YQTSKEKKFKKNILQKIQNLNAKPIWDKIPIFKKSSHRS). The interval 118-334 (NINKKHSFEN…GALNRVIVNA (217 aa)) is domain III, AAA+ region. ATP contacts are provided by Gly162, Gly164, Lys165, and Thr166. Residues 335–454 (NFTHRSITVE…FSNLIRTLSV (120 aa)) form a domain IV, binds dsDNA region.

It belongs to the DnaA family. In terms of assembly, oligomerizes as a right-handed, spiral filament on DNA at oriC.

The protein localises to the cytoplasm. Plays an essential role in the initiation and regulation of chromosomal replication. ATP-DnaA binds to the origin of replication (oriC) to initiate formation of the DNA replication initiation complex once per cell cycle. Binds the DnaA box (a 9 base pair repeat at the origin) and separates the double-stranded (ds)DNA. Forms a right-handed helical filament on oriC DNA; dsDNA binds to the exterior of the filament while single-stranded (ss)DNA is stabiized in the filament's interior. The ATP-DnaA-oriC complex binds and stabilizes one strand of the AT-rich DNA unwinding element (DUE), permitting loading of DNA polymerase. After initiation quickly degrades to an ADP-DnaA complex that is not apt for DNA replication. Binds acidic phospholipids. The chain is Chromosomal replication initiator protein DnaA from Buchnera aphidicola subsp. Schizaphis graminum (strain Sg).